Consider the following 442-residue polypeptide: ATP-dependent protease ATPase subunit HslU (442 aa).

ATP contacts are provided by residues Ile18 and 60–65; that span reads GVGKTE. A disordered region spans residues 133-156; the sequence is DALLPKPKNDWDNTDSDTSSNTRQ. ATP-binding residues include Asp255, Glu320, and Arg392.

It belongs to the ClpX chaperone family. HslU subfamily. In terms of assembly, a double ring-shaped homohexamer of HslV is capped on each side by a ring-shaped HslU homohexamer. The assembly of the HslU/HslV complex is dependent on binding of ATP.

The protein resides in the cytoplasm. In terms of biological role, ATPase subunit of a proteasome-like degradation complex; this subunit has chaperone activity. The binding of ATP and its subsequent hydrolysis by HslU are essential for unfolding of protein substrates subsequently hydrolyzed by HslV. HslU recognizes the N-terminal part of its protein substrates and unfolds these before they are guided to HslV for hydrolysis. In Shewanella sp. (strain ANA-3), this protein is ATP-dependent protease ATPase subunit HslU.